Reading from the N-terminus, the 531-residue chain is Pescadillo homolog (531 aa).

The BRCT domain maps to 309 to 398 (SIKTMFKGCV…RKLPTERYMP (90 aa)).

This sequence belongs to the pescadillo family.

It localises to the nucleus. Its subcellular location is the nucleolus. It is found in the nucleoplasm. Required for maturation of ribosomal RNAs and formation of the large ribosomal subunit. The polypeptide is Pescadillo homolog (Caenorhabditis elegans).